We begin with the raw amino-acid sequence, 338 residues long: Popeye domain-containing protein 1-A (338 aa).

Residues 1 to 40 (MTTESIFITTLPMDFNSQFDNITIGLNDNETLCENWREIH) are Extracellular-facing. N-linked (GlcNAc...) asparagine glycans are attached at residues asparagine 21 and asparagine 29. Residues 41–61 (HLVFHLANTCFAAGLVIPSTL) traverse the membrane as a helical segment. Over 62–65 (NLHM) the chain is Cytoplasmic. Residues 66–86 (LFLRGMLCLGCTFFIIWAVLF) traverse the membrane as a helical segment. Residues 87–91 (RCALD) lie on the Extracellular side of the membrane. Residues 92–112 (IMIWNATFLSINFMHFVYLVY) form a helical membrane-spanning segment. Topologically, residues 113–338 (KKRPIKIKKE…VGPLSHAVFC (226 aa)) are cytoplasmic. A disordered region spans residues 296 to 317 (TNDNEDGLQNFLRGTSTTSSQR). Positions 307–317 (LRGTSTTSSQR) are enriched in polar residues.

Belongs to the popeye family. Expressed in the heart.

The protein resides in the lateral cell membrane. The protein localises to the cell junction. It localises to the tight junction. Its subcellular location is the membrane. Its function is as follows. Cell adhesion molecule involved in the establishment and/or maintenance of cell integrity. Plays a role in vamp3-mediated vesicular transport and recycling of different receptor molecules. May be involved in the formation and regulation of the tight junction (TJ) paracellular permeability barrier in epithelial cells. May induce primordial adhesive contact and aggregation of epithelial cells in a Ca(2+)-independent manner. May be involved in epithelial movement during corneal sheet formation and regeneration. May play a role in the regulation of cell shape and movement by modulating the Rho-GTPase activity. May also be involved in striated muscle regeneration and in the regulation of cell spreading. This Xenopus laevis (African clawed frog) protein is Popeye domain-containing protein 1-A (popdc1-a).